The following is a 429-amino-acid chain: Serine hydroxymethyltransferase (429 aa).

(6S)-5,6,7,8-tetrahydrofolate is bound by residues L126 and G130 to L132. At K235 the chain carries N6-(pyridoxal phosphate)lysine. S359–F361 is a binding site for (6S)-5,6,7,8-tetrahydrofolate.

Belongs to the SHMT family. Homodimer. Pyridoxal 5'-phosphate serves as cofactor.

It is found in the cytoplasm. It catalyses the reaction (6R)-5,10-methylene-5,6,7,8-tetrahydrofolate + glycine + H2O = (6S)-5,6,7,8-tetrahydrofolate + L-serine. Its pathway is one-carbon metabolism; tetrahydrofolate interconversion. It participates in amino-acid biosynthesis; glycine biosynthesis; glycine from L-serine: step 1/1. Catalyzes the reversible interconversion of serine and glycine with tetrahydrofolate (THF) serving as the one-carbon carrier. This reaction serves as the major source of one-carbon groups required for the biosynthesis of purines, thymidylate, methionine, and other important biomolecules. Also exhibits THF-independent aldolase activity toward beta-hydroxyamino acids, producing glycine and aldehydes, via a retro-aldol mechanism. The protein is Serine hydroxymethyltransferase of Synechococcus sp. (strain CC9311).